A 105-amino-acid polypeptide reads, in one-letter code: D-galactoside-specific lectin (105 aa).

One can recognise an SUEL-type lectin domain in the interval 13-103; that stretch reads VCEDSSLTIS…KYLAVTYICS (91 aa).

As to quaternary structure, homodimer; disulfide-linked.

It is found in the cytoplasm. Its function is as follows. This protein binds D-galactoside. May have an important role in the activation of eggs (triggered by fertilization), or in their subsequent differentiation. The dimeric form is essential for hemagglutination activity. This is D-galactoside-specific lectin from Heliocidaris crassispina (Sea urchin).